The following is a 189-amino-acid chain: Elongation factor P (189 aa).

This sequence belongs to the elongation factor P family.

It is found in the cytoplasm. It participates in protein biosynthesis; polypeptide chain elongation. In terms of biological role, involved in peptide bond synthesis. Stimulates efficient translation and peptide-bond synthesis on native or reconstituted 70S ribosomes in vitro. Probably functions indirectly by altering the affinity of the ribosome for aminoacyl-tRNA, thus increasing their reactivity as acceptors for peptidyl transferase. This is Elongation factor P from Ehrlichia chaffeensis (strain ATCC CRL-10679 / Arkansas).